A 321-amino-acid polypeptide reads, in one-letter code: GTP 3',8-cyclase (321 aa).

One can recognise a Radical SAM core domain in the interval 5-227; that stretch reads SYDRVVDYLR…DEGYDGASPS (223 aa). Arginine 14 contributes to the GTP binding site. Positions 21 and 25 each coordinate [4Fe-4S] cluster. Tyrosine 27 is a binding site for S-adenosyl-L-methionine. Cysteine 28 contributes to the [4Fe-4S] cluster binding site. Residue arginine 64 coordinates GTP. An S-adenosyl-L-methionine-binding site is contributed by glycine 68. Threonine 95 contacts GTP. Serine 119 contributes to the S-adenosyl-L-methionine binding site. Position 155 (lysine 155) interacts with GTP. Position 189 (methionine 189) interacts with S-adenosyl-L-methionine. [4Fe-4S] cluster is bound by residues cysteine 249 and cysteine 252. Residue 254-256 participates in GTP binding; it reads RIR. Residue cysteine 266 coordinates [4Fe-4S] cluster.

It belongs to the radical SAM superfamily. MoaA family. Monomer and homodimer. [4Fe-4S] cluster is required as a cofactor.

It catalyses the reaction GTP + AH2 + S-adenosyl-L-methionine = (8S)-3',8-cyclo-7,8-dihydroguanosine 5'-triphosphate + 5'-deoxyadenosine + L-methionine + A + H(+). It functions in the pathway cofactor biosynthesis; molybdopterin biosynthesis. Catalyzes the cyclization of GTP to (8S)-3',8-cyclo-7,8-dihydroguanosine 5'-triphosphate. The sequence is that of GTP 3',8-cyclase from Sulfurimonas denitrificans (strain ATCC 33889 / DSM 1251) (Thiomicrospira denitrificans (strain ATCC 33889 / DSM 1251)).